Consider the following 409-residue polypeptide: Arginine deiminase (409 aa).

Cysteine 399 functions as the Amidino-cysteine intermediate in the catalytic mechanism.

Belongs to the arginine deiminase family.

It localises to the cytoplasm. The catalysed reaction is L-arginine + H2O = L-citrulline + NH4(+). Its pathway is amino-acid degradation; L-arginine degradation via ADI pathway; carbamoyl phosphate from L-arginine: step 1/2. In Streptococcus pneumoniae (strain P1031), this protein is Arginine deiminase.